We begin with the raw amino-acid sequence, 178 residues long: Crossover junction endodeoxyribonuclease RuvC (178 aa).

Residues Asp21, Glu81, and His154 contribute to the active site. Residues Asp21, Glu81, and His154 each coordinate Mg(2+).

This sequence belongs to the RuvC family. Homodimer which binds Holliday junction (HJ) DNA. The HJ becomes 2-fold symmetrical on binding to RuvC with unstacked arms; it has a different conformation from HJ DNA in complex with RuvA. In the full resolvosome a probable DNA-RuvA(4)-RuvB(12)-RuvC(2) complex forms which resolves the HJ. Mg(2+) serves as cofactor.

The protein localises to the cytoplasm. The catalysed reaction is Endonucleolytic cleavage at a junction such as a reciprocal single-stranded crossover between two homologous DNA duplexes (Holliday junction).. The RuvA-RuvB-RuvC complex processes Holliday junction (HJ) DNA during genetic recombination and DNA repair. Endonuclease that resolves HJ intermediates. Cleaves cruciform DNA by making single-stranded nicks across the HJ at symmetrical positions within the homologous arms, yielding a 5'-phosphate and a 3'-hydroxyl group; requires a central core of homology in the junction. The consensus cleavage sequence is 5'-(A/T)TT(C/G)-3'. Cleavage occurs on the 3'-side of the TT dinucleotide at the point of strand exchange. HJ branch migration catalyzed by RuvA-RuvB allows RuvC to scan DNA until it finds its consensus sequence, where it cleaves and resolves the cruciform DNA. The protein is Crossover junction endodeoxyribonuclease RuvC of Treponema denticola (strain ATCC 35405 / DSM 14222 / CIP 103919 / JCM 8153 / KCTC 15104).